The following is a 224-amino-acid chain: PKHD-type hydroxylase Sbal195_0750 (224 aa).

Residues 78-176 (QFYPPLFNRY…RTAAFMWLQS (99 aa)) form the Fe2OG dioxygenase domain. Positions 96, 98, and 157 each coordinate Fe cation. Arg167 contacts 2-oxoglutarate.

Fe(2+) serves as cofactor. It depends on L-ascorbate as a cofactor.

The protein is PKHD-type hydroxylase Sbal195_0750 of Shewanella baltica (strain OS195).